The following is a 233-amino-acid chain: Sugar fermentation stimulation protein homolog (233 aa).

It belongs to the SfsA family.

This Teredinibacter turnerae (strain ATCC 39867 / T7901) protein is Sugar fermentation stimulation protein homolog.